The sequence spans 205 residues: Inactive ribonuclease-like protein 9 (205 aa).

The N-terminal stretch at 1 to 26 (MMRTLITTHPLPLLLLPQQLLQPVQF) is a signal peptide. Disulfide bonds link Cys-98-Cys-153, Cys-116-Cys-168, and Cys-123-Cys-130. Asn-131 and Asn-143 each carry an N-linked (GlcNAc...) asparagine glycan.

The protein belongs to the pancreatic ribonuclease family.

It localises to the secreted. Functionally, does not exhibit any ribonuclease activity. The chain is Inactive ribonuclease-like protein 9 (RNASE9) from Pan troglodytes (Chimpanzee).